We begin with the raw amino-acid sequence, 201 residues long: L(+)-tartrate dehydratase subunit beta (201 aa).

His-37 is a catalytic residue.

It belongs to the class-I fumarase family. In terms of assembly, heterotetramer of two alpha and two beta subunits.

The catalysed reaction is (2R,3R)-tartrate = oxaloacetate + H2O. This is L(+)-tartrate dehydratase subunit beta (ttdB) from Shigella sonnei (strain Ss046).